The chain runs to 194 residues: CD-NTase-associated protein 15 (194 aa).

The tract at residues 1-73 is required for cell toxicity; it reads MRMWELLPSK…DYLKHKFCPD (73 aa). Transmembrane regions (helical) follow at residues 15-35 and 43-63; these read ISTI…GQPV and ITTI…YFYI.

The protein belongs to the CBASS Cap15 membrane effector family. In terms of assembly, the beta barrel domain oligomerizes; in the presence of cyclic nucleotides (probably 3',3'-cGAMP, but the cognate CD-NTase makes at least 4 other cyclic nucleotides) higher-level oligomers are detected.

It localises to the cell inner membrane. Functionally, effector protein of a CBASS antivirus system. CBASS (cyclic oligonucleotide-based antiphage signaling system) provides immunity against bacteriophages. The CD-NTase protein (CdnB) synthesizes cyclic nucleotides in response to infection; these serve as specific second messenger signals. The signals activate a diverse range of effectors, leading to bacterial cell death and thus abortive phage infection. Causes cell death in response to 3',3'-cGAMP upon coexpression in E.coli with V.cholerae DncV; inactivating DncV prevents cell death. Upon induction in E.coli with non-cognate DncV, the cell inner membrane shrinks and separates from the cell wall with a concomitant increase in the periplasm. Binds cyclic nucleotide second messenger 3',3'-cGAMP, probably oligomerizing, and induces cell membrane shrinkage and rupture, leading to cell death. A type I CBASS system. Protects E.coli against phage infection. When the CBASS operon (cdnB-cap15) is introduced in E.coli MG1655 there is about 100-fold protection against phage T2 and about 10-fold protection against phage T5 and T6. The polypeptide is CD-NTase-associated protein 15 (Escherichia albertii).